The sequence spans 167 residues: Phospholipase A2 (167 aa).

A signal peptide spans 1–18 (MQVVLGSLFLLLLSTSHG). Residues 19–33 (WQIRDRIGDNELEER) constitute a propeptide that is removed on maturation. Tryptophan 41, glycine 43, and glycine 45 together coordinate Ca(2+). Disulfide bonds link cysteine 42–cysteine 64, cysteine 63–cysteine 103, cysteine 70–cysteine 96, cysteine 94–cysteine 128, and cysteine 138–cysteine 146. N-linked (GlcNAc...) asparagine glycosylation is present at asparagine 46. Histidine 67 is an active-site residue. Aspartate 68 lines the Ca(2+) pocket. Aspartate 97 is an active-site residue.

It belongs to the phospholipase A2 family. Group III subfamily. Ca(2+) serves as cofactor. Post-translationally, N-glycosylated; contains mannose, N-acetylglucosamine and fucose alphal-6 and/or alphal-3 linked to the innermost N-acetylglucosamine. In terms of tissue distribution, expressed by the venom gland.

The protein localises to the secreted. It catalyses the reaction a 1,2-diacyl-sn-glycero-3-phosphocholine + H2O = a 1-acyl-sn-glycero-3-phosphocholine + a fatty acid + H(+). Functionally, in vivo, intraplantar injection in mice cause spontaneous pain behaviors and paw swelling. PLA2 catalyzes the calcium-dependent hydrolysis of the 2-acyl groups in 3-sn-phosphoglycerides. The sequence is that of Phospholipase A2 from Apis mellifera (Honeybee).